We begin with the raw amino-acid sequence, 151 residues long: Deoxyuridine 5'-triphosphate nucleotidohydrolase (151 aa).

Substrate-binding positions include 70–72 (RSG), Asn-83, 87–89 (LID), and Met-97.

It belongs to the dUTPase family. Mg(2+) serves as cofactor.

The catalysed reaction is dUTP + H2O = dUMP + diphosphate + H(+). Its pathway is pyrimidine metabolism; dUMP biosynthesis; dUMP from dCTP (dUTP route): step 2/2. Functionally, this enzyme is involved in nucleotide metabolism: it produces dUMP, the immediate precursor of thymidine nucleotides and it decreases the intracellular concentration of dUTP so that uracil cannot be incorporated into DNA. The chain is Deoxyuridine 5'-triphosphate nucleotidohydrolase from Salmonella enteritidis PT4 (strain P125109).